The chain runs to 20 residues: Alpha-basrubrin (20 aa).

The segment covering Gly1 to Gln13 has biased composition (basic and acidic residues). Positions Gly1 to Gly20 are disordered.

In terms of biological role, possesses antifungal activity against B.cinerea, M.arachidicola and F.oxysporum but not C.comatus and R.solani. Inhibits HIV-1 reverse transcriptase and cell-free translation. This chain is Alpha-basrubrin, found in Basella alba (Malabar spinach).